We begin with the raw amino-acid sequence, 392 residues long: Extracellular metalloproteinase 4 (392 aa).

Residues 1–9 (VHSVVDYVS) constitute a propeptide that is removed on maturation. The N-linked (GlcNAc...) asparagine glycan is linked to Asn-176. His-193 serves as a coordination point for Zn(2+). Glu-194 is an active-site residue. His-197 lines the Zn(2+) pocket. Residues Asn-359 and Asn-385 are each glycosylated (N-linked (GlcNAc...) asparagine).

The protein belongs to the peptidase M36 family. It depends on Zn(2+) as a cofactor.

It localises to the secreted. In terms of biological role, secreted metalloproteinase probably acting as a virulence factor. In Trichophyton soudanense, this protein is Extracellular metalloproteinase 4 (MEP4).